A 2800-amino-acid polypeptide reads, in one-letter code: Probable serine/threonine-protein kinase roco5 (2800 aa).

The segment covering 1–61 has biased composition (basic and acidic residues); the sequence is MEVIKKEKKD…EKEKDKEKDG (61 aa). Disordered regions lie at residues 1–92, 123–225, and 417–437; these read MEVI…SAQS, TTTT…SPVD, and GINS…SSGI. Over residues 77 to 86 the composition is skewed to pro residues; that stretch reads PTPPPPPPPS. Low complexity-rich tracts occupy residues 123-134 and 143-170; these read TTTTTTTTSSNN and NNNT…SSNN. Residues 176–190 are compositionally biased toward polar residues; it reads INVTSLDSGGNNNAS. Basic and acidic residues predominate over residues 194 to 218; it reads ISNEHSPKNRKEKEKEKDKDNKEDS. The DH domain occupies 227-508; it reads NRRKLVEGFM…VQVVKDIVNE (282 aa). Positions 417–429 are enriched in low complexity; it reads GINSANSNNNNNN. Residues 540–649 enclose the PH domain; the sequence is KFLKEGILIE…WFQVLSQASL (110 aa). 4 LRR repeats span residues 777 to 800, 805 to 832, 834 to 856, and 861 to 885; these read NKSI…ALGD, NHSL…GILS, PSIT…HISK, and NQTL…IIDQ. Residues 926 to 946 are disordered; it reads KQLQVNQKSTTPSTSTSTTSS. Positions 934-946 are enriched in low complexity; sequence STTPSTSTSTTSS. 10 LRR repeats span residues 971–984, 985–1007, 1008–1031, 1033–1056, 1058–1077, 1078–1101, 1128–1151, 1152–1174, 1175–1197, and 1199–1222; these read LNKL…SRRI, SDLK…ILKE, LKNL…ISEM, ELKL…TLCK, NHLD…SLSQ, LVNL…IFTR, AIKA…IGSI, SSLI…IGKL, SSLQ…LSQL, and TLKV…KISI. A Roc domain is found at 1244-1464; that stretch reads KEKPCMRMKL…NHIVKLGKAE (221 aa). Residues 1257-1264, 1348-1352, and 1407-1410 each bind GTP; these read GQENVGKT, DFAGQ, and THLD. Positions 1473-1604 constitute a COR 1 domain; the sequence is RSYFQLENLI…KFEIVHPLPD (132 aa). Disordered stretches follow at residues 1605–1665 and 1688–1711; these read PKAT…SLLN and DQST…FSDS. 3 stretches are compositionally biased toward low complexity: residues 1610-1645, 1653-1665, and 1688-1707; these read SSSS…SSTT, RTNS…SLLN, and DQST…SSNN. Residues 1717–1790 form the COR 2 domain; that stretch reads KSSTKHLVPI…VKEFWKNGLL (74 aa). A compositionally biased stretch (low complexity) spans 1886–2008; the sequence is SQQQHHQQQQ…LNPDSTSSSN (123 aa). 2 disordered regions span residues 1886 to 2011 and 2050 to 2070; these read SQQQ…NETS and RNTN…SSIV. Over residues 2050–2059 the composition is skewed to polar residues; that stretch reads RNTNKPKING. Residues 2175 to 2440 enclose the Protein kinase domain; it reads LEIIEKVGEG…PTFIDIHSRL (266 aa). Residues 2181 to 2189 and K2202 contribute to the ATP site; that span reads VGEGGFGIV. Catalysis depends on D2300, which acts as the Proton acceptor. Composition is skewed to low complexity over residues 2452–2490, 2583–2654, 2669–2685, and 2694–2704; these read TTTN…GTTS, LKTP…SPIS, TTQT…PNPT, and SSLSSNSINKP. Disordered regions lie at residues 2452 to 2498 and 2544 to 2800; these read TTTN…HPQL and AGGN…AIPK. Residues 2705–2723 show a composition bias toward pro residues; sequence PSKPLPTPGGVTSPPPPPT. Polar residues predominate over residues 2730 to 2756; that stretch reads IKFNSISAGNKTIGQSSTLPSSTLKQF. Residues 2757–2787 are compositionally biased toward low complexity; sequence TANNNTSPSGSSSLPNSTVSSPSSSFLLRPT.

The protein belongs to the protein kinase superfamily. TKL Ser/Thr protein kinase family. ROCO subfamily.

It catalyses the reaction L-seryl-[protein] + ATP = O-phospho-L-seryl-[protein] + ADP + H(+). The catalysed reaction is L-threonyl-[protein] + ATP = O-phospho-L-threonyl-[protein] + ADP + H(+). In terms of biological role, may act as a serine/threonine-protein kinase and guanine-nucleotide releasing factor. This Dictyostelium discoideum (Social amoeba) protein is Probable serine/threonine-protein kinase roco5 (roco5).